The primary structure comprises 1112 residues: cGMP-inhibited 3',5'-cyclic phosphodiesterase 3B (1112 aa).

A compositionally biased stretch (basic and acidic residues) spans 1–10 (MRRDERDAKA). An interaction with RAPGEF3 region spans residues 1-25 (MRRDERDAKAMRSLQPPDGAGSPPE). The segment at 1 to 26 (MRRDERDAKAMRSLQPPDGAGSPPES) is disordered. At serine 13 the chain carries Phosphoserine. 6 helical membrane passes run 88 to 108 (FVLA…AAWL), 117 to 137 (HSLS…CFLT), 152 to 172 (WWLL…WQWW), 192 to 212 (AAAG…TLAH), 220 to 240 (VLVL…LGSL), and 247 to 267 (LLSG…DHFF). Serine 295 bears the Phosphoserine; by PKB/AKT1 or PKB/AKT2 mark. 2 positions are modified to phosphoserine: serine 296 and serine 442. The interval 418–471 (EKGDRKLNKGLNRNSLPTPQLRRSSGTSGLLPVEQSSRWDRNNGKRPHQEFGIS) is disordered. The span at 428–445 (LNRNSLPTPQLRRSSGTS) shows a compositional bias: polar residues. The segment at 436-460 (PQLRRSSGTSGLLPVEQSSRWDRNN) is interaction with PIK3R6. Over residues 454-466 (SRWDRNNGKRPHQ) the composition is skewed to basic and acidic residues. Residues 651-1079 (TNIEQEVSLD…KIWKEIVEEE (429 aa)) enclose the PDEase domain. Histidine 737 acts as the Proton donor in catalysis. Histidine 737 contacts AMP. Residues histidine 741, histidine 821, aspartate 822, and aspartate 937 each contribute to the Mg(2+) site. AMP contacts are provided by aspartate 822, aspartate 937, and glutamine 988. 2 stretches are compositionally biased toward acidic residues: residues 1017–1041 (EEDN…EEME) and 1103–1112 (QVIEEADEEE). Disordered stretches follow at residues 1017–1051 (EEDN…PPRR) and 1092–1112 (ENSS…DEEE).

This sequence belongs to the cyclic nucleotide phosphodiesterase family. PDE3 subfamily. As to quaternary structure, homodimer. Interacts with PIK3CG; regulates PDE3B activity and thereby cAMP levels in cells. Interacts with RAPGEF3 and PIK3R6; form a signaling complex that regulates phosphatidylinositol 3-kinase gamma in angiogenesis. Interacts with ABHD15; this interaction regulates PDE3B's stability and expression and, thereby, impacts the antilipolytic action of insulin. Requires Mg(2+) as cofactor. The cofactor is Mn(2+). Phosphorylation at Ser-295 mediates insulin-induced activation of PDE3B. As to expression, abundant in adipose tissues.

It is found in the membrane. The catalysed reaction is a nucleoside 3',5'-cyclic phosphate + H2O = a nucleoside 5'-phosphate + H(+). It catalyses the reaction 3',5'-cyclic AMP + H2O = AMP + H(+). It carries out the reaction 3',5'-cyclic GMP + H2O = GMP + H(+). With respect to regulation, inhibited by cGMP. Functionally, cyclic nucleotide phosphodiesterase with a dual-specificity for the second messengers cAMP and cGMP, which are key regulators of many important physiological process. Regulates angiogenesis by inhibiting the cAMP-dependent guanine nucleotide exchange factor RAPGEF3 and downstream phosphatidylinositol 3-kinase gamma-mediated signaling. Controls cardiac contractility by reducing cAMP concentration in cardiocytes. The polypeptide is cGMP-inhibited 3',5'-cyclic phosphodiesterase 3B (Homo sapiens (Human)).